Consider the following 1292-residue polypeptide: MDASYDGTEVTVVMEEIEEAYCYTSPGPPKKKKKYKIHGEKTKKPRSAYLLYYYDIYLKVQQELPHLPQSEINKKISESWRLLSVAERSYYLEKAKLEKEGLDPNSKLSALTAVVPDIPGFRKILPRSDYIIIPKSSLQEDRSCPQLELCVAQNQMSPKGPPLVSNTAPETVPSHAGMAEQCLAVEALAEEVGALTQSGAVQEIATSEILSQDVLLEDASLEVGESHQPYQTSLVIEETLVNGSPDLPTGSLAVPHPQVGESVSVVTVMRDSSESSSSAPATQFIMLPLPAYSVVENPTSIKLTTTYTRRGHGTCTSPGCSFTYVTRHKPPKCPTCGNFLGGKWIPKEKPAKVKVELASGVSSKGSVVKRNQQPVTTEQNSSKENASKLTLENSEAVSQLLNVAPPREVGEESEWEEVIISDAHVLVKEAPGNCGTAVTKTPVVKSGVQPEVTLGTTDNDSPGADVPTPSEGTSTSSPLPAPKKPTGADLLTPGSRAPELKGRARGKPSLLAAARPMRAILPAPVNVGRGSSMGLPRARQAFSLSDKTPSVRTCGLKPSTLKQLGQPIQQPSGPGEVKLPSGPSNRTSQVKVVEVKPDMFPPYKYSCTVTLDLGLATSRGRGKCKNPSCSYVYTNRHKPRICPSCGVNLAKDRTEKTTKAIEVSSPLPDVLNATEPLSTAQREIQRQSTLQLLRKVLQIPENESELAEVFALIHELNSSRLILSNVSEETVTIEQTSWSNYYESPSTQCLLCSSPLFKGGQNSLAGPQECWLLTASRLQTVTAQVKMCLNPHCLALHSFIDIYTGLFNVGNKLLVSLDLLFAIRNQIKLGEDPRVSINVVLKSVQEQTEKTLTSEELSQLQELLCNGYWAFECLTVRDYNDMICGICGVAPKVEMAQRSEENVLALKSVEFTWPEFLGSNEVNVEDFWATMETEVIEQVAFPASIPITKFDASVIAPFFPPLMRGAVVVNTEKDKNLDVQPVPGSGSALVRLLQEGTCKLDEIGSYSEEKLQHLLRQCGIPFGAEDSKDQLCFSLLALYESVQNGARAIRPPRHFTGGKIYKVCPHQVVCGSKYLVRGESARDHVDLLASSRHWPPVYVVDMATSVALCADLCYPELTNQMWGRNQGCFSSPTEPPVSVSCPELLDQHYTVDMTETEHSIQHPVTKTATRRIVHAGLQPNPGDPSAGHHSLALCPELAPYATILASIVDSKPNGVRQRPIAFDNATHYYLYNRLMDFLTSREIVNRQIHDIVQSCQPGEVVIRDTLYRLGVAQIKTETEEEGEEEEVAAVAE.

The segment at residues 42–110 (TKKPRSAYLL…GLDPNSKLSA (69 aa)) is a DNA-binding region (HMG box). 3 disordered regions span residues 363–391 (SKGSVVKRNQQPVTTEQNSSKENASKLTL), 448–505 (VQPE…GRAR), and 562–588 (KQLGQPIQQPSGPGEVKLPSGPSNRTS). The span at 370–391 (RNQQPVTTEQNSSKENASKLTL) shows a compositional bias: polar residues. A compositionally biased stretch (low complexity) spans 467 to 478 (PTPSEGTSTSSP). Polar residues predominate over residues 562–572 (KQLGQPIQQPS).

The protein localises to the nucleus. The polypeptide is HMG domain-containing protein 3 (Homo sapiens (Human)).